We begin with the raw amino-acid sequence, 404 residues long: MDYSEIMVRHGELSTKGKNRMRFINKLKNNIQDVLAPFPAITVRSDRDRTHVSLNGTDYQPIVEALKLVFGVQALSPVYKLEKSVPLLVTAVQDIMTSLYRDGLTFKIATKRSDHAFELDSRELNSLLGGAVFEVLPNIQAQMKHPDVTLKVEIRDEAAYISYEEIKGAGGLPVGTSGKGMLMLSGGIDSPVAGYLALKRGLDIEVVHFASPPYTSPGALAKAQDLTRRLTRFGGNIQFIEVPFTEIQEEIKNKAPEAYLMTLTRRFMMRITDAIREQRKGLVIVNGESLGQVASQTLESMQAINAVTSTPIIRPVVTMDKLEIIEMAQAIDTFDISIQPFEDCCTIFAPDRPKTNPKLSNAEKYEERFDIDGLVQRAVSGIVVTEITPEIVNDEVENLIDALL.

A THUMP domain is found at 60–165; the sequence is QPIVEALKLV…DEAAYISYEE (106 aa). Residues 183–184, 208–209, R265, G287, and Q296 contribute to the ATP site; these read ML and HF.

The protein belongs to the ThiI family.

The protein localises to the cytoplasm. The enzyme catalyses [ThiI sulfur-carrier protein]-S-sulfanyl-L-cysteine + a uridine in tRNA + 2 reduced [2Fe-2S]-[ferredoxin] + ATP + H(+) = [ThiI sulfur-carrier protein]-L-cysteine + a 4-thiouridine in tRNA + 2 oxidized [2Fe-2S]-[ferredoxin] + AMP + diphosphate. It carries out the reaction [ThiS sulfur-carrier protein]-C-terminal Gly-Gly-AMP + S-sulfanyl-L-cysteinyl-[cysteine desulfurase] + AH2 = [ThiS sulfur-carrier protein]-C-terminal-Gly-aminoethanethioate + L-cysteinyl-[cysteine desulfurase] + A + AMP + 2 H(+). Its pathway is cofactor biosynthesis; thiamine diphosphate biosynthesis. Catalyzes the ATP-dependent transfer of a sulfur to tRNA to produce 4-thiouridine in position 8 of tRNAs, which functions as a near-UV photosensor. Also catalyzes the transfer of sulfur to the sulfur carrier protein ThiS, forming ThiS-thiocarboxylate. This is a step in the synthesis of thiazole, in the thiamine biosynthesis pathway. The sulfur is donated as persulfide by IscS. The protein is Probable tRNA sulfurtransferase of Streptococcus pyogenes serotype M4 (strain MGAS10750).